The chain runs to 931 residues: Scaffold attachment factor B1 (931 aa).

Residues 1–24 show a composition bias toward low complexity; that stretch reads MAETLSGLGDSGAASAAAVSSAAS. Positions 1-35 are disordered; it reads MAETLSGLGDSGAASAAAVSSAASETGTRRLSDLR. An N-acetylalanine modification is found at Ala-2. 2 positions are modified to phosphoserine: Ser-24 and Ser-55. The SAP domain maps to 31–65; sequence LSDLRVIDLRAELRKRNLTSSGNKSVLMERLKKAI. Residues 64-121 form a disordered region; sequence AIEEEGGNPDEIEVISEGNKKMPKRPSKGKKPEDEGVEDNGLEENSGDGQEDVETSLE. A compositionally biased stretch (acidic residues) spans 67-77; it reads EEGGNPDEIEV. Ser-79 is modified (phosphoserine). Residues 98 to 118 are compositionally biased toward acidic residues; sequence EGVEDNGLEENSGDGQEDVET. Glycyl lysine isopeptide (Lys-Gly) (interchain with G-Cter in SUMO2) cross-links involve residues Lys-171 and Lys-185. Residues Ser-194, Ser-196, and Ser-208 each carry the phosphoserine modification. Disordered regions lie at residues 205–304 and 316–430; these read EEAS…TRCQ and KREP…GRNF. Positions 224-233 are enriched in basic and acidic residues; it reads CKSEPVKEEG. A Glycyl lysine isopeptide (Lys-Gly) (interchain with G-Cter in SUMO) cross-link involves residue Lys-230. Positions 267 to 287 are enriched in acidic residues; that stretch reads EEEEEEEEEEEQEEEQEEEGD. Residue Lys-316 forms a Glycyl lysine isopeptide (Lys-Gly) (interchain with G-Cter in SUMO) linkage. Residues 341–356 show a composition bias toward polar residues; sequence EQSSTAAQLPETTSQE. Residues 368–380 show a composition bias toward basic and acidic residues; it reads EPRDSKDDVKKFA. Residue Lys-403 forms a Glycyl lysine isopeptide (Lys-Gly) (interchain with G-Cter in SUMO2) linkage. Ser-405 and Ser-406 each carry phosphoserine. The segment covering 412-423 has biased composition (basic and acidic residues); it reads DTKRLSREEKGR. Lys-414 is covalently cross-linked (Glycyl lysine isopeptide (Lys-Gly) (interchain with G-Cter in SUMO2)). One can recognise an RRM domain in the interval 428-506; that stretch reads RNFWVSGLSS…KMISVEKAKS (79 aa). Ser-437 is subject to Phosphoserine. Composition is skewed to basic and acidic residues over residues 500–573 and 581–592; these read SVEK…ERSR and GTERTVVMDKSK. Disordered stretches follow at residues 500-663, 691-720, 759-843, and 872-931; these read SVEK…WERE, RLERERMHVEQERRREQERIHREREELRRQ, RYHS…PRRD, and RWQG…QQTQ. Residues Lys-505, Lys-536, Lys-565, and Lys-592 each participate in a glycyl lysine isopeptide (Lys-Gly) (interchain with G-Cter in SUMO2) cross-link. The segment at 550 to 816 is interaction with POLR2A; SFRS1; SFRS9 and SFRS10; sequence TDDGSTEKSK…RHGGPERHGR (267 aa). Lys-600 is covalently cross-linked (Glycyl lysine isopeptide (Lys-Gly) (interchain with G-Cter in SUMO1); alternate). A Glycyl lysine isopeptide (Lys-Gly) (interchain with G-Cter in SUMO2); alternate cross-link involves residue Lys-600. 4 positions are modified to phosphoserine: Ser-602, Ser-604, Ser-623, and Ser-626. A compositionally biased stretch (basic and acidic residues) spans 603-663; it reads GSKERASKSQ…QRLQAQWERE (61 aa). The Nuclear localization signal motif lies at 621 to 638; that stretch reads KRSVVSFDKVKESRKSRD. N6-acetyllysine is present on Lys-629. Basic and acidic residues predominate over residues 759–820; sequence RYHSDFSRQD…PERHGRDSRD (62 aa). Arg-834 is subject to Omega-N-methylarginine. An asymmetric dimethylarginine mark is found at Arg-892, Arg-898, Arg-908, and Arg-914.

Monomer and homodimer. Interacts with KHDRBS3. Interacts with CLK2. Interacts with POLR2A, ASF/SRSF1, SRp30c/SRFS9 and TRA2B/SFRS10. Interacts with SRPK1 and inhibits its activity. Interacts with RBMX. Interacts with FUS. Interacts with ZBED4. In terms of processing, phosphorylated by CDC-like kinase 2 (CLK2). Post-translationally, sumoylated by PIAS1 with SUMO1 and SUMO2/3, desumoylated by SENP1. Sumoylation is required for transcriptional repressor activity.

It localises to the nucleus. Binds to scaffold/matrix attachment region (S/MAR) DNA and forms a molecular assembly point to allow the formation of a 'transcriptosomal' complex (consisting of SR proteins and RNA polymerase II) coupling transcription and RNA processing. Functions as an estrogen receptor corepressor and can also bind to the HSP27 promoter and decrease its transcription. Thereby acts as a negative regulator of cell proliferation. When associated with RBMX, binds to and stimulates transcription from the SREBF1 promoter. In Rattus norvegicus (Rat), this protein is Scaffold attachment factor B1 (Safb).